A 226-amino-acid polypeptide reads, in one-letter code: Leucyl/phenylalanyl-tRNA--protein transferase (226 aa).

Belongs to the L/F-transferase family.

The protein resides in the cytoplasm. It carries out the reaction N-terminal L-lysyl-[protein] + L-leucyl-tRNA(Leu) = N-terminal L-leucyl-L-lysyl-[protein] + tRNA(Leu) + H(+). The enzyme catalyses N-terminal L-arginyl-[protein] + L-leucyl-tRNA(Leu) = N-terminal L-leucyl-L-arginyl-[protein] + tRNA(Leu) + H(+). It catalyses the reaction L-phenylalanyl-tRNA(Phe) + an N-terminal L-alpha-aminoacyl-[protein] = an N-terminal L-phenylalanyl-L-alpha-aminoacyl-[protein] + tRNA(Phe). In terms of biological role, functions in the N-end rule pathway of protein degradation where it conjugates Leu, Phe and, less efficiently, Met from aminoacyl-tRNAs to the N-termini of proteins containing an N-terminal arginine or lysine. This is Leucyl/phenylalanyl-tRNA--protein transferase from Pseudomonas aeruginosa (strain LESB58).